The following is a 353-amino-acid chain: Ribosomal RNA small subunit methyltransferase H (353 aa).

S-adenosyl-L-methionine contacts are provided by residues 39 to 41 (AGH), Asp58, Phe90, Asp108, and Gln115. The disordered stretch occupies residues 334 to 353 (SEDGVRGAHGHRRRTQARRG). Positions 341 to 353 (AHGHRRRTQARRG) are enriched in basic residues.

This sequence belongs to the methyltransferase superfamily. RsmH family.

It is found in the cytoplasm. It carries out the reaction cytidine(1402) in 16S rRNA + S-adenosyl-L-methionine = N(4)-methylcytidine(1402) in 16S rRNA + S-adenosyl-L-homocysteine + H(+). In terms of biological role, specifically methylates the N4 position of cytidine in position 1402 (C1402) of 16S rRNA. The chain is Ribosomal RNA small subunit methyltransferase H from Bifidobacterium animalis subsp. lactis (strain AD011).